The sequence spans 124 residues: Probable glycine cleavage system H protein (124 aa).

The Lipoyl-binding domain occupies Val23–Arg104. Lys64 carries the post-translational modification N6-lipoyllysine.

Belongs to the GcvH family. In terms of assembly, the glycine cleavage system is composed of four proteins: P, T, L and H. The cofactor is (R)-lipoate.

Its function is as follows. The glycine cleavage system catalyzes the degradation of glycine. The H protein shuttles the methylamine group of glycine from the P protein to the T protein. The polypeptide is Probable glycine cleavage system H protein (Picrophilus torridus (strain ATCC 700027 / DSM 9790 / JCM 10055 / NBRC 100828 / KAW 2/3)).